The following is an 883-amino-acid chain: MRVFPIPLLSHVRGLIRQGPSSRFYVVPALARTNLTISHSEQVKEGTFDYKALELNDIGVLRVLNSMKDDPYLALSFLKRIEGNVTLPSVQAYATVIRIVCGWGLDKKLDTFLFELVRRGDEGRGFSVMDLLKAIGEMEQSLVLLIRVSTALVKAYANLDMFDEAIDIFFRAYYSLGRAPDIKALNFLISRMIASGRSDMVVGFFWEIERLGLDADAHTYVLVVQALWRNDDKEELEKLLSRLLISETRNPCVFYLNFIEGLCLNQMTDIAYFLLQPLRDANILVDKSDLGIAYRKVVRGLCYEMRIEDAESVVLDMEKHGIDPDVYVYSAIIEGHRKNMNIPKAVDVFNKMLKKRKRINCVIVSSILQCYCQMGNFSEAYDLFKEFRETNISLDRVCYNVAFDALGKLGKVEEAIELFREMTGKGIAPDVINYTTLIGGCCLQGKCSDAFDLMIEMDGTGKTPDIVIYNVLAGGLATNGLAQEAFETLKMMENRGVKPTYVTHNMVIEGLIDAGELDKAEAFYESLEHKSRENDASMVKGFCAAGCLDHAFERFIRLEFPLPKSVYFTLFTSLCAEKDYISKAQDLLDRMWKLGVEPEKSMYGKLIGAWCRVNNVRKAREFFEILVTKKIVPDLFTYTIMINTYCRLNEPKQAYALFEDMKRRDVKPDVVTYSVLLNSDPELDMKREMEAFDVIPDVVYYTIMINRYCHLNDLKKVYALFKDMKRREIVPDVVTYTVLLKNKPERNLSREMKAFDVKPDVFYYTVLIDWQCKIGDLGEAKRIFDQMIESGVDPDAAPYTALIACCCKMGYLKEAKMIFDRMIESGVKPDVVPYTALIAGCCRNGFVLKAVKLVKEMLEKGIKPTKASLSAVHYAKLKAKGLR.

PPR repeat units follow at residues 145–180 (LIRV…GRAP), 181–215 (DIKA…GLDA), 216–251 (DAHT…TRNP), 253–285 (VFYL…NILV), 290–324 (LGIA…GIDP), 325–359 (DVYV…RKRI), 360–394 (NCVI…NISL), 395–429 (DRVC…GIAP), 430–464 (DVIN…GKTP), 465–499 (DIVI…GVKP), 500–534 (TYVT…SREN), 537–561 (SMVK…LEFP), 563–598 (PKSV…GVEP), 599–633 (EKSM…KIVP), 634–668 (DLFT…DVKP), 697–731 (DVVY…EIVP), 760–794 (DVFY…GVDP), 795–829 (DAAP…GVKP), and 830–864 (DVVP…GIKP).

The protein belongs to the PPR family. P subfamily.

This chain is Putative pentatricopeptide repeat-containing protein At1g13800, found in Arabidopsis thaliana (Mouse-ear cress).